The primary structure comprises 122 residues: Large ribosomal subunit protein uL18 (122 aa).

Residues 1–25 (MSQISRKQQTQKRHRRLRRHITGTS) are disordered. Basic residues predominate over residues 9–21 (QTQKRHRRLRRHI).

It belongs to the universal ribosomal protein uL18 family. Part of the 50S ribosomal subunit; part of the 5S rRNA/L5/L18/L25 subcomplex. Contacts the 5S and 23S rRNAs.

In terms of biological role, this is one of the proteins that bind and probably mediate the attachment of the 5S RNA into the large ribosomal subunit, where it forms part of the central protuberance. This is Large ribosomal subunit protein uL18 from Synechococcus sp. (strain CC9605).